The sequence spans 351 residues: Amylovoran biosynthesis glycosyltransferase AmsD (351 aa).

Belongs to the glycosyltransferase group 1 family. Glycosyltransferase 4 subfamily.

The protein operates within glycan metabolism; exopolysaccharide biosynthesis. In terms of biological role, involved in the biosynthesis of amylovoran which functions as a virulence factor. May be involved in the formation of galactose alpha-1,6 linkages in amylovoran. This Erwinia amylovora (Fire blight bacteria) protein is Amylovoran biosynthesis glycosyltransferase AmsD (amsD).